The chain runs to 339 residues: HTH-type transcriptional regulator SyrM 2 (339 aa).

The HTH lysR-type domain maps to 32-89 (VDLNLLVELEALLQYRNITHAAQHVGRSQPAMSRALSRLRDMFNDDLLVRGSSGLVPT). A DNA-binding region (H-T-H motif) is located at residues 49 to 68 (ITHAAQHVGRSQPAMSRALS).

It belongs to the LysR transcriptional regulatory family.

Its function is as follows. Acts in trans to stimulate nod gene expression. The protein is HTH-type transcriptional regulator SyrM 2 (syrM2) of Sinorhizobium fredii (strain NBRC 101917 / NGR234).